Consider the following 369-residue polypeptide: Anthranilate phosphoribosyltransferase (369 aa).

5-phospho-alpha-D-ribose 1-diphosphate contacts are provided by residues glycine 111, 114 to 115, threonine 119, 121 to 124, 139 to 147, and serine 151; these read GD, NIST, and KHGNRGVSS. Glycine 111 serves as a coordination point for anthranilate. Residue serine 123 participates in Mg(2+) binding. Asparagine 142 contributes to the anthranilate binding site. Arginine 197 serves as a coordination point for anthranilate. 2 residues coordinate Mg(2+): aspartate 256 and glutamate 257.

This sequence belongs to the anthranilate phosphoribosyltransferase family. Homodimer. Mg(2+) serves as cofactor.

It catalyses the reaction N-(5-phospho-beta-D-ribosyl)anthranilate + diphosphate = 5-phospho-alpha-D-ribose 1-diphosphate + anthranilate. It participates in amino-acid biosynthesis; L-tryptophan biosynthesis; L-tryptophan from chorismate: step 2/5. Catalyzes the transfer of the phosphoribosyl group of 5-phosphorylribose-1-pyrophosphate (PRPP) to anthranilate to yield N-(5'-phosphoribosyl)-anthranilate (PRA). The chain is Anthranilate phosphoribosyltransferase from Cupriavidus pinatubonensis (strain JMP 134 / LMG 1197) (Cupriavidus necator (strain JMP 134)).